Consider the following 397-residue polypeptide: Homoserine O-acetyltransferase (397 aa).

The region spanning 58 to 368 (NAVLVLHALT…EAKWGHDAFL (311 aa)) is the AB hydrolase-1 domain. The active-site Nucleophile is the S164. R233 provides a ligand contact to substrate. Residues D331 and H364 contribute to the active site. D365 is a substrate binding site.

It belongs to the AB hydrolase superfamily. MetX family. Homodimer.

It localises to the cytoplasm. The catalysed reaction is L-homoserine + acetyl-CoA = O-acetyl-L-homoserine + CoA. It functions in the pathway amino-acid biosynthesis; L-methionine biosynthesis via de novo pathway; O-acetyl-L-homoserine from L-homoserine: step 1/1. Transfers an acetyl group from acetyl-CoA to L-homoserine, forming acetyl-L-homoserine. The chain is Homoserine O-acetyltransferase from Solidesulfovibrio magneticus (strain ATCC 700980 / DSM 13731 / RS-1) (Desulfovibrio magneticus).